Here is a 524-residue protein sequence, read N- to C-terminus: Casein kinase I homolog 3 (524 aa).

The region spanning 14 to 319 (YAVGPKIGEG…YLISLMDDAL (306 aa)) is the Protein kinase domain. ATP-binding positions include 20–28 (IGEGSFGVI) and lysine 60. Catalysis depends on aspartate 150, which acts as the Proton acceptor. Disordered regions lie at residues 352–414 (HGYG…KQQH) and 427–474 (PETH…EHNL). Over residues 360 to 373 (RVNGNTARNNVNTN) the composition is skewed to low complexity. Composition is skewed to polar residues over residues 374–413 (SKTR…TKQQ) and 429–474 (THSN…EHNL). The short motif at 444–447 (YDSI) is the YXXZ targeting signal element. S-palmitoyl cysteine attachment occurs at residues cysteine 517, cysteine 518, cysteine 519, cysteine 520, cysteine 522, cysteine 523, and cysteine 524.

The protein belongs to the protein kinase superfamily. CK1 Ser/Thr protein kinase family. Casein kinase I subfamily.

The protein resides in the cell membrane. It localises to the nucleus membrane. Its subcellular location is the vacuole membrane. It catalyses the reaction L-seryl-[protein] + ATP = O-phospho-L-seryl-[protein] + ADP + H(+). The enzyme catalyses L-threonyl-[protein] + ATP = O-phospho-L-threonyl-[protein] + ADP + H(+). Its function is as follows. Casein kinases are operationally defined by their preferential utilization of acidic proteins such as caseins as substrates. Phosphorylates MON1, inhibiting the guanine nucleotide exchange factor activity of the MON1-CCZ1 complex, possibly by preventing its recruitment to membranes by small GTPase RAB5 homologs. In Saccharomyces cerevisiae (strain ATCC 204508 / S288c) (Baker's yeast), this protein is Casein kinase I homolog 3 (YCK3).